Here is a 401-residue protein sequence, read N- to C-terminus: Calcium-responsive transcription coactivator (401 aa).

The N-terminal auto-inhibitory domain; necessary for interaction with SMARCA4/BRG1 stretch occupies residues 1–148; that stretch reads MSVAFASARP…TLPTTSMSMS (148 aa). Positions 50–53 match the SH2-binding motif; sequence YQQI. Disordered stretches follow at residues 72–171 and 214–401; these read QSLL…VPMQ and TRAR…NYQQ. Residues 85-106 show a composition bias toward low complexity; sequence LGPGALSQSGSSQGLHPQGSLS. The span at 128-137 shows a compositional bias: polar residues; the sequence is NHVSMQQTAQ. The segment covering 138-149 has biased composition (low complexity); it reads STLPTTSMSMSG. The segment at 149-237 is methionine-rich intra-molecular domain; it reads GSGHGTGPGY…GGSMMGQRPM (89 aa). The tract at residues 251-322 is MFD domain; sequence YLGQEEYYSE…SQYSQQQAGY (72 aa). Polar residues-rich tracts occupy residues 260–276 and 285–294; these read EQYS…SQQY and AYQQSSYTEQ. The span at 295 to 304 shows a compositional bias: basic and acidic residues; sequence SYDRSFEDPT. The span at 310 to 374 shows a compositional bias: low complexity; sequence GGNSQYSQQQ…QGQGQQYGSY (65 aa). Residues 339–401 are necessary for nuclear localization; sequence NQQSYPGQQQ…EQGQYGNYQQ (63 aa). Positions 358–361 match the SH2-binding motif; the sequence is SQYS. Residues 375–387 show a composition bias toward polar residues; that stretch reads RTSQTGPSAQQQR. Positions 376–384 match the SH3-binding motif; it reads TSQTGPSAQ. Positions 389 to 401 are enriched in low complexity; it reads YGYEQGQYGNYQQ. A necessary for interaction with CREBBP and for the recruitment of CREBBP to the nuclear bodies region spans residues 392-401; that stretch reads EQGQYGNYQQ. Residues 396-399 carry the SH2-binding motif; that stretch reads YGNY.

It belongs to the SS18 family. As to quaternary structure, homodimer. Dimerization may be necessary for its function in neuronal dendritic development. Interacts (via C-terminus) with CREBBP (via N-terminus), EP300 and SMARCA4/BRG1. Interacts with the nBAF complex. Association with CREBBP facilitates transcription while the association with SMARCA4/BRG1 suppresses CREST-mediated transcription in resting neurons. As to expression, brain (at protein level). Also found in the heart, liver, kidney and testis.

It localises to the nucleus. The protein resides in the chromosome. Its subcellular location is the centromere. It is found in the kinetochore. Functionally, transcriptional activator which is required for calcium-dependent dendritic growth and branching in cortical neurons. Recruits CREB-binding protein (CREBBP) to nuclear bodies. Component of the CREST-BRG1 complex, a multiprotein complex that regulates promoter activation by orchestrating a calcium-dependent release of a repressor complex and a recruitment of an activator complex. In resting neurons, transcription of the c-FOS promoter is inhibited by BRG1-dependent recruitment of a phospho-RB1-HDAC1 repressor complex. Upon calcium influx, RB1 is dephosphorylated by calcineurin, which leads to release of the repressor complex. At the same time, there is increased recruitment of CREBBP to the promoter by a CREST-dependent mechanism, which leads to transcriptional activation. The CREST-BRG1 complex also binds to the NR2B promoter, and activity-dependent induction of NR2B expression involves a release of HDAC1 and recruitment of CREBBP. This Rattus norvegicus (Rat) protein is Calcium-responsive transcription coactivator (Ss18l1).